Here is a 27-residue protein sequence, read N- to C-terminus: uncharacterized protein (27 aa).

It localises to the plastid. The protein resides in the cyanelle. This is an uncharacterized protein from Cyanophora paradoxa.